Consider the following 154-residue polypeptide: 17.7 kDa class I heat shock protein (154 aa).

The region spanning 40–154 (ETSAFANTRI…PDVKSIEISG (115 aa)) is the sHSP domain.

The protein belongs to the small heat shock protein (HSP20) family. As to quaternary structure, forms oligomeric structures.

It localises to the cytoplasm. The polypeptide is 17.7 kDa class I heat shock protein (Solanum peruvianum (Peruvian tomato)).